The sequence spans 208 residues: ATP synthase subunit b 1 (208 aa).

Over residues 1-18 (MFVSTAFAQTATESQPAS) the composition is skewed to polar residues. Positions 1-26 (MFVSTAFAQTATESQPASTAGEHGAA) are disordered. A helical transmembrane segment spans residues 56–78 (SQVLWLAITFGLFYLFLSRVVLP).

Belongs to the ATPase B chain family. F-type ATPases have 2 components, F(1) - the catalytic core - and F(0) - the membrane proton channel. F(1) has five subunits: alpha(3), beta(3), gamma(1), delta(1), epsilon(1). F(0) has three main subunits: a(1), b(2) and c(10-14). The alpha and beta chains form an alternating ring which encloses part of the gamma chain. F(1) is attached to F(0) by a central stalk formed by the gamma and epsilon chains, while a peripheral stalk is formed by the delta and b chains.

The protein localises to the cell inner membrane. Functionally, f(1)F(0) ATP synthase produces ATP from ADP in the presence of a proton or sodium gradient. F-type ATPases consist of two structural domains, F(1) containing the extramembraneous catalytic core and F(0) containing the membrane proton channel, linked together by a central stalk and a peripheral stalk. During catalysis, ATP synthesis in the catalytic domain of F(1) is coupled via a rotary mechanism of the central stalk subunits to proton translocation. In terms of biological role, component of the F(0) channel, it forms part of the peripheral stalk, linking F(1) to F(0). This Brucella abortus (strain 2308) protein is ATP synthase subunit b 1.